A 231-amino-acid polypeptide reads, in one-letter code: Demethylmenaquinone methyltransferase (231 aa).

Residues Thr62, Asp80, 100–101 (DA), and Ser117 each bind S-adenosyl-L-methionine.

The protein belongs to the class I-like SAM-binding methyltransferase superfamily. MenG/UbiE family.

It carries out the reaction a 2-demethylmenaquinol + S-adenosyl-L-methionine = a menaquinol + S-adenosyl-L-homocysteine + H(+). It participates in quinol/quinone metabolism; menaquinone biosynthesis; menaquinol from 1,4-dihydroxy-2-naphthoate: step 2/2. Its function is as follows. Methyltransferase required for the conversion of demethylmenaquinol (DMKH2) to menaquinol (MKH2). In Mycobacterium marinum (strain ATCC BAA-535 / M), this protein is Demethylmenaquinone methyltransferase.